We begin with the raw amino-acid sequence, 176 residues long: Corrinoid adenosyltransferase (176 aa).

Residues 6–14 (TRTGDNGTT), Lys-24, 131–136 (RRLERI), and Asn-155 contribute to the ATP site.

The protein belongs to the Cob(I)alamin adenosyltransferase family.

It localises to the cytoplasm. It carries out the reaction 2 cob(II)yrinate a,c diamide + reduced [electron-transfer flavoprotein] + 2 ATP = 2 adenosylcob(III)yrinate a,c-diamide + 2 triphosphate + oxidized [electron-transfer flavoprotein] + 3 H(+). It catalyses the reaction 2 cob(II)alamin + reduced [electron-transfer flavoprotein] + 2 ATP = 2 adenosylcob(III)alamin + 2 triphosphate + oxidized [electron-transfer flavoprotein] + 3 H(+). Its pathway is cofactor biosynthesis; adenosylcobalamin biosynthesis; adenosylcobalamin from cob(II)yrinate a,c-diamide: step 2/7. The chain is Corrinoid adenosyltransferase from Citrobacter freundii.